The following is a 265-amino-acid chain: Protein ENDO16 (265 aa).

Residues 25-27 carry the Cell attachment site motif; it reads RGD. The tract at residues 71-265 is disordered; it reads SPNAPSSQME…KEEEEEERSG (195 aa). A compositionally biased stretch (polar residues) spans 73–92; the sequence is NAPSSQMESEGSANPSTIGS. A run of 4 repeats spans residues 75–94, 105–124, 128–147, and 148–167. Residues 75–257 form a 6 X approximate repeats region; it reads PSSQMESEGS…QSESEDPEKE (183 aa). Acidic residues-rich tracts occupy residues 112–125, 133–144, 152–169, 194–212, 222–243, and 250–265; these read EGSEGEDSEETEGA, ESEGGDQEESEG, MESEGQEPESEEDVDSGE, EVDEQTSDGEEPEEPEEPG, ESEGEGNESEEEEVEEPQEVIE, and ESEDPEKEEEEEERSG. 2 tandem repeats follow at residues 217–236 and 238–257. N-linked (GlcNAc...) asparagine glycosylation occurs at Asn228.

In terms of tissue distribution, first expressed in the vegetal plate and progressively the expression becomes restricted to a subset of endodermal cells as development proceeds.

Functionally, may be an adhesion molecule involved in gastrulation of the sea urchin embryo. The polypeptide is Protein ENDO16 (ENDO16) (Strongylocentrotus purpuratus (Purple sea urchin)).